The following is a 157-amino-acid chain: Epithelial membrane protein 1 (157 aa).

Residues Met-1–Val-21 traverse the membrane as a helical segment. N-linked (GlcNAc...) asparagine glycosylation is found at Asn-43 and Asn-46. Transmembrane regions (helical) follow at residues Phe-67–Phe-87, Phe-95–Ile-115, and Tyr-134–Leu-154.

It belongs to the PMP-22/EMP/MP20 family.

It localises to the membrane. This is Epithelial membrane protein 1 (EMP1) from Homo sapiens (Human).